A 244-amino-acid polypeptide reads, in one-letter code: DNA polymerase sliding clamp (244 aa).

Belongs to the PCNA family. As to quaternary structure, homotrimer. The subunits circularize to form a toroid; DNA passes through its center. Replication factor C (RFC) is required to load the toroid on the DNA.

Sliding clamp subunit that acts as a moving platform for DNA processing. Responsible for tethering the catalytic subunit of DNA polymerase and other proteins to DNA during high-speed replication. This is DNA polymerase sliding clamp from Methanothrix thermoacetophila (strain DSM 6194 / JCM 14653 / NBRC 101360 / PT) (Methanosaeta thermophila).